Consider the following 366-residue polypeptide: Acetylserotonin O-methyltransferase 3 (366 aa).

4 residues coordinate S-adenosyl-L-homocysteine: Gly209, Asp232, Asp253, and Lys267. Residue His271 is the Proton acceptor of the active site. Catalysis depends on residues Glu302 and Glu332.

The protein belongs to the class I-like SAM-binding methyltransferase superfamily. Cation-independent O-methyltransferase family. As to quaternary structure, homodimer. As to expression, expressed at low levels in roots, shoots, leaves, stems and flowers.

The protein resides in the cytoplasm. The catalysed reaction is N-acetylserotonin + S-adenosyl-L-methionine = melatonin + S-adenosyl-L-homocysteine + H(+). The protein operates within aromatic compound metabolism; melatonin biosynthesis; melatonin from serotonin: step 1/2. Methyltransferase which catalyzes the transfer of a methyl group onto N-acetylserotonin, producing melatonin (N-acetyl-5-methoxytryptamine). The chain is Acetylserotonin O-methyltransferase 3 from Oryza sativa subsp. japonica (Rice).